Consider the following 371-residue polypeptide: Bifunctional enzyme IspD/IspF (371 aa).

The segment at 1 to 212 is 2-C-methyl-D-erythritol 4-phosphate cytidylyltransferase; that stretch reads MLDISLIMLG…CLIPPSNEHF (212 aa). Residues 212 to 371 are 2-C-methyl-D-erythritol 2,4-cyclodiphosphate synthase; that stretch reads FTGIGFDAHE…ANLKYYDWTK (160 aa). Aspartate 218 and histidine 220 together coordinate a divalent metal cation. Residues 218-220 and 244-245 each bind 4-CDP-2-C-methyl-D-erythritol 2-phosphate; these read DAH and HS. Histidine 252 is an a divalent metal cation binding site. Residues 266 to 268, 271 to 275, 342 to 345, phenylalanine 349, and arginine 352 contribute to the 4-CDP-2-C-methyl-D-erythritol 2-phosphate site; these read DIG, FPDTD, and TTTE.

It in the N-terminal section; belongs to the IspD/TarI cytidylyltransferase family. IspD subfamily. This sequence in the C-terminal section; belongs to the IspF family. A divalent metal cation serves as cofactor.

The catalysed reaction is 2-C-methyl-D-erythritol 4-phosphate + CTP + H(+) = 4-CDP-2-C-methyl-D-erythritol + diphosphate. It carries out the reaction 4-CDP-2-C-methyl-D-erythritol 2-phosphate = 2-C-methyl-D-erythritol 2,4-cyclic diphosphate + CMP. It functions in the pathway isoprenoid biosynthesis; isopentenyl diphosphate biosynthesis via DXP pathway; isopentenyl diphosphate from 1-deoxy-D-xylulose 5-phosphate: step 2/6. Its pathway is isoprenoid biosynthesis; isopentenyl diphosphate biosynthesis via DXP pathway; isopentenyl diphosphate from 1-deoxy-D-xylulose 5-phosphate: step 4/6. Its function is as follows. Bifunctional enzyme that catalyzes the formation of 4-diphosphocytidyl-2-C-methyl-D-erythritol from CTP and 2-C-methyl-D-erythritol 4-phosphate (MEP) (IspD), and catalyzes the conversion of 4-diphosphocytidyl-2-C-methyl-D-erythritol 2-phosphate (CDP-ME2P) to 2-C-methyl-D-erythritol 2,4-cyclodiphosphate (ME-CPP) with a corresponding release of cytidine 5-monophosphate (CMP) (IspF). This is Bifunctional enzyme IspD/IspF from Campylobacter curvus (strain 525.92).